A 189-amino-acid chain; its full sequence is Cell division protein SepF (189 aa).

Disordered regions lie at residues 1–75 (MEGQ…GLPG) and 155–174 (STPS…SPTP).

This sequence belongs to the SepF family. In terms of assembly, homodimer. Interacts with FtsZ.

The protein resides in the cytoplasm. Its function is as follows. Cell division protein that is part of the divisome complex and is recruited early to the Z-ring. Probably stimulates Z-ring formation, perhaps through the cross-linking of FtsZ protofilaments. Its function overlaps with FtsA. This Synechococcus sp. (strain JA-3-3Ab) (Cyanobacteria bacterium Yellowstone A-Prime) protein is Cell division protein SepF.